Consider the following 481-residue polypeptide: MSKVLTSLPTGERVGIAFSGGLDTSVAVAWMRDKGAVPCTYTADIGQYDEPDIASVPDRAKTYGAEVARLVDCRAALVEEGLAALTCGAFHIRSGGRAYFNTTPLGRAVTGTLLVRAMLEDDVQIWGDGSTFKGNDIERFYRYGLLANPQLRIYKPWLDADFVTELGGRKEMSEWLVAHDLPYRDSTEKAYSTDANIWGATHEAKTLEHLDTGVETVEPIMGVRFWDPSVEIAPEDVTIGFDQGRPVTINGKEFASAVDLVMEANAVGGRHGMGMSDQIENRIIEAKSRGIYEAPGMALLHAAYERLVNAIHNEDTLAQYHTEGRRLGRLMYEGRWLDPQSLMIRESLQRWVGSAVTGEVTLRLRRGEDYSILDTTGPAFSYHPDKLSMERTEDSAFGPVDRIGQLTMRNLDIADSRAKLEQYAGLGLIGTANPAIGAAQAAATGLIGAMPEGGAQAIASRGEVSADDELLDRAAMESGTD.

Residues 17–25 (AFSGGLDTS) and A43 contribute to the ATP site. Y99 is a binding site for L-citrulline. The ATP site is built by G129 and T131. Residues T131, N135, and D136 each contribute to the L-aspartate site. N135 lines the L-citrulline pocket. ATP is bound at residue D136. The L-citrulline site is built by R139 and S192. Position 194 (D194) interacts with ATP. Residues T201, E203, and E280 each coordinate L-citrulline.

The protein belongs to the argininosuccinate synthase family. Type 2 subfamily. Homotetramer.

Its subcellular location is the cytoplasm. It catalyses the reaction L-citrulline + L-aspartate + ATP = 2-(N(omega)-L-arginino)succinate + AMP + diphosphate + H(+). Its pathway is amino-acid biosynthesis; L-arginine biosynthesis; L-arginine from L-ornithine and carbamoyl phosphate: step 2/3. This Streptomyces coelicolor (strain ATCC BAA-471 / A3(2) / M145) protein is Argininosuccinate synthase (argG).